Consider the following 167-residue polypeptide: Small ribosomal subunit protein uS5 (167 aa).

Positions 12 to 75 (LEERVVTINR…EDAKKNMVLV (64 aa)) constitute an S5 DRBM domain.

Belongs to the universal ribosomal protein uS5 family. In terms of assembly, part of the 30S ribosomal subunit. Contacts proteins S4 and S8.

Its function is as follows. With S4 and S12 plays an important role in translational accuracy. Located at the back of the 30S subunit body where it stabilizes the conformation of the head with respect to the body. This Listeria monocytogenes serotype 4b (strain F2365) protein is Small ribosomal subunit protein uS5.